A 145-amino-acid chain; its full sequence is Cytochrome c2 (145 aa).

The first 21 residues, M1–A21, serve as a signal peptide directing secretion. Pyrrolidone carboxylic acid is present on Q22. C36, C39, H40, and M121 together coordinate heme c.

The protein belongs to the cytochrome c family. In terms of processing, binds 1 heme c group covalently per subunit.

Its subcellular location is the periplasm. Functionally, cytochrome c2 is found mainly in purple, non-sulfur, photosynthetic bacteria where it functions as the electron donor to the oxidized bacteriochlorophyll in the photophosphorylation pathway. However, it may also have a role in the respiratory chain and is found in some non-photosynthetic bacteria. This is Cytochrome c2 (cycA) from Cereibacter sphaeroides (strain ATCC 17023 / DSM 158 / JCM 6121 / CCUG 31486 / LMG 2827 / NBRC 12203 / NCIMB 8253 / ATH 2.4.1.) (Rhodobacter sphaeroides).